The sequence spans 311 residues: tRNA dimethylallyltransferase (311 aa).

Position 16-23 (16-23 (GATASGKS)) interacts with ATP. Residue 18-23 (TASGKS) coordinates substrate. Interaction with substrate tRNA stretches follow at residues 41-44 (DSRQ) and 165-169 (QRLIR).

It belongs to the IPP transferase family. In terms of assembly, monomer. Mg(2+) is required as a cofactor.

It catalyses the reaction adenosine(37) in tRNA + dimethylallyl diphosphate = N(6)-dimethylallyladenosine(37) in tRNA + diphosphate. Its function is as follows. Catalyzes the transfer of a dimethylallyl group onto the adenine at position 37 in tRNAs that read codons beginning with uridine, leading to the formation of N6-(dimethylallyl)adenosine (i(6)A). This is tRNA dimethylallyltransferase from Chlorobium chlorochromatii (strain CaD3).